Reading from the N-terminus, the 268-residue chain is Probable 6-phosphogluconolactonase 1 (268 aa).

Belongs to the glucosamine/galactosamine-6-phosphate isomerase family. 6-phosphogluconolactonase subfamily.

It localises to the cytoplasm. Its subcellular location is the cytosol. It catalyses the reaction 6-phospho-D-glucono-1,5-lactone + H2O = 6-phospho-D-gluconate + H(+). The protein operates within carbohydrate degradation; pentose phosphate pathway; D-ribulose 5-phosphate from D-glucose 6-phosphate (oxidative stage): step 2/3. In terms of biological role, catalyzes the hydrolysis of 6-phosphogluconolactone to 6-phosphogluconate. This Arabidopsis thaliana (Mouse-ear cress) protein is Probable 6-phosphogluconolactonase 1.